Here is a 399-residue protein sequence, read N- to C-terminus: CCA-adding enzyme (399 aa).

The ATP site is built by Gly32 and Arg35. CTP is bound by residues Gly32 and Arg35. Positions 45 and 47 each coordinate Mg(2+). The ATP site is built by Arg116, Asp159, Arg162, Arg165, and Arg168. Positions 116, 159, 162, 165, and 168 each coordinate CTP.

The protein belongs to the tRNA nucleotidyltransferase/poly(A) polymerase family. Bacterial CCA-adding enzyme type 3 subfamily. Homodimer. Mg(2+) is required as a cofactor.

It catalyses the reaction a tRNA precursor + 2 CTP + ATP = a tRNA with a 3' CCA end + 3 diphosphate. The enzyme catalyses a tRNA with a 3' CCA end + 2 CTP + ATP = a tRNA with a 3' CCACCA end + 3 diphosphate. In terms of biological role, catalyzes the addition and repair of the essential 3'-terminal CCA sequence in tRNAs without using a nucleic acid template. Adds these three nucleotides in the order of C, C, and A to the tRNA nucleotide-73, using CTP and ATP as substrates and producing inorganic pyrophosphate. tRNA 3'-terminal CCA addition is required both for tRNA processing and repair. Also involved in tRNA surveillance by mediating tandem CCA addition to generate a CCACCA at the 3' terminus of unstable tRNAs. While stable tRNAs receive only 3'-terminal CCA, unstable tRNAs are marked with CCACCA and rapidly degraded. The chain is CCA-adding enzyme from Streptococcus gordonii (strain Challis / ATCC 35105 / BCRC 15272 / CH1 / DL1 / V288).